We begin with the raw amino-acid sequence, 217 residues long: Peptide deformylase (217 aa).

Fe cation contacts are provided by C91 and H133. The active site involves E134. H137 provides a ligand contact to Fe cation. The interval 153–217 (VSEDGEEEEE…RRGSAAAKEE (65 aa)) is disordered. Positions 155–176 (EDGEEEEEAEVAEVMPEPEAEG) are enriched in acidic residues. Residues 177–192 (AGEPSAEGAGQAAAEA) show a composition bias toward low complexity. Residues 206 to 217 (GERRGSAAAKEE) are compositionally biased toward basic and acidic residues.

Belongs to the polypeptide deformylase family. Requires Fe(2+) as cofactor.

It catalyses the reaction N-terminal N-formyl-L-methionyl-[peptide] + H2O = N-terminal L-methionyl-[peptide] + formate. Removes the formyl group from the N-terminal Met of newly synthesized proteins. Requires at least a dipeptide for an efficient rate of reaction. N-terminal L-methionine is a prerequisite for activity but the enzyme has broad specificity at other positions. The chain is Peptide deformylase from Symbiobacterium thermophilum (strain DSM 24528 / JCM 14929 / IAM 14863 / T).